The primary structure comprises 182 residues: CDP-diacylglycerol--glycerol-3-phosphate 3-phosphatidyltransferase (182 aa).

The Cytoplasmic portion of the chain corresponds to 1–12 (MRLNIPTCLTLF). A helical membrane pass occupies residues 13-37 (RLIIVPFFIIVFYLPFSNASFYSAI). Residues 38–60 (IFILAALTDWFDGFLARKLNQTT) lie on the Periplasmic side of the membrane. A helical membrane pass occupies residues 61 to 81 (CFGAFLDPVADKIIVVIGLIL). Residues 82-86 (IIEYF) lie on the Cytoplasmic side of the membrane. Residues 87-107 (HSFWITIPSLIMIIREIIISS) traverse the membrane as a helical segment. The Periplasmic segment spans residues 108-145 (LREWMAEIGKNNLLSVSLISKLKTSIQMLAIFSLLWKE). The helical transmembrane segment at 146-168 (TYIIIIIGILSLYVSSILAFLSM) threads the bilayer. The Cytoplasmic portion of the chain corresponds to 169-181 (LKYFYIAWRDLFR).

It belongs to the CDP-alcohol phosphatidyltransferase class-I family.

It is found in the cell inner membrane. The enzyme catalyses a CDP-1,2-diacyl-sn-glycerol + sn-glycerol 3-phosphate = a 1,2-diacyl-sn-glycero-3-phospho-(1'-sn-glycero-3'-phosphate) + CMP + H(+). It participates in phospholipid metabolism; phosphatidylglycerol biosynthesis; phosphatidylglycerol from CDP-diacylglycerol: step 1/2. In terms of biological role, catalyzes the conversion of cytidine diphosphate diacylglycerol (CDP-DG) and glycerol 3-phosphate into phosphatidylglycerol. Essential for the synthesis of anionic phospholipids, thereby playing a role in balancing the ratio of zwitterionic and anionic phospholipids, which is thought to be important for normal membrane function. The protein is CDP-diacylglycerol--glycerol-3-phosphate 3-phosphatidyltransferase of Wigglesworthia glossinidia brevipalpis.